Reading from the N-terminus, the 377-residue chain is Succinyl-diaminopimelate desuccinylase (377 aa).

His75 contributes to the Zn(2+) binding site. Asp77 is an active-site residue. Asp106 lines the Zn(2+) pocket. Glu136 serves as the catalytic Proton acceptor. 3 residues coordinate Zn(2+): Glu137, Glu165, and His350.

The protein belongs to the peptidase M20A family. DapE subfamily. In terms of assembly, homodimer. The cofactor is Zn(2+). Requires Co(2+) as cofactor.

The enzyme catalyses N-succinyl-(2S,6S)-2,6-diaminopimelate + H2O = (2S,6S)-2,6-diaminopimelate + succinate. It participates in amino-acid biosynthesis; L-lysine biosynthesis via DAP pathway; LL-2,6-diaminopimelate from (S)-tetrahydrodipicolinate (succinylase route): step 3/3. Functionally, catalyzes the hydrolysis of N-succinyl-L,L-diaminopimelic acid (SDAP), forming succinate and LL-2,6-diaminopimelate (DAP), an intermediate involved in the bacterial biosynthesis of lysine and meso-diaminopimelic acid, an essential component of bacterial cell walls. The chain is Succinyl-diaminopimelate desuccinylase from Sphingopyxis alaskensis (strain DSM 13593 / LMG 18877 / RB2256) (Sphingomonas alaskensis).